A 206-amino-acid polypeptide reads, in one-letter code: ATP-dependent Clp protease proteolytic subunit (206 aa).

Serine 110 functions as the Nucleophile in the catalytic mechanism. Residue histidine 135 is part of the active site.

It belongs to the peptidase S14 family. As to quaternary structure, fourteen ClpP subunits assemble into 2 heptameric rings which stack back to back to give a disk-like structure with a central cavity, resembling the structure of eukaryotic proteasomes.

The protein resides in the cytoplasm. It catalyses the reaction Hydrolysis of proteins to small peptides in the presence of ATP and magnesium. alpha-casein is the usual test substrate. In the absence of ATP, only oligopeptides shorter than five residues are hydrolyzed (such as succinyl-Leu-Tyr-|-NHMec, and Leu-Tyr-Leu-|-Tyr-Trp, in which cleavage of the -Tyr-|-Leu- and -Tyr-|-Trp bonds also occurs).. In terms of biological role, cleaves peptides in various proteins in a process that requires ATP hydrolysis. Has a chymotrypsin-like activity. Plays a major role in the degradation of misfolded proteins. In Edwardsiella ictaluri (strain 93-146), this protein is ATP-dependent Clp protease proteolytic subunit.